The following is a 588-amino-acid chain: Pectinesterase 4 (588 aa).

An N-terminal signal peptide occupies residues 1–24 (MIGKVVVSVASILLIVGVAIGVVA). 3 N-linked (GlcNAc...) asparagine glycosylation sites follow: Asn86, Asn206, and Asn342. Substrate contacts are provided by Thr353 and Gln383. Asp406 serves as the catalytic Proton donor. Asp427 acts as the Nucleophile in catalysis. Substrate is bound by residues Arg496 and Trp498.

It in the N-terminal section; belongs to the PMEI family. This sequence in the C-terminal section; belongs to the pectinesterase family. Expressed in pollen grains and pollen tubes.

It is found in the secreted. The protein localises to the cell wall. The catalysed reaction is [(1-&gt;4)-alpha-D-galacturonosyl methyl ester](n) + n H2O = [(1-&gt;4)-alpha-D-galacturonosyl](n) + n methanol + n H(+). Its pathway is glycan metabolism; pectin degradation; 2-dehydro-3-deoxy-D-gluconate from pectin: step 1/5. Functionally, acts in the modification of cell walls via demethylesterification of cell wall pectin. Plays an important role in growth of pollen tubes in female floral tissues, possibly via enhancing the interaction between the pollen tube and female floral tissues by modification of the cell walls. The chain is Pectinesterase 4 (PME4) from Arabidopsis thaliana (Mouse-ear cress).